Consider the following 92-residue polypeptide: Probable acyl carrier protein (92 aa).

A Carrier domain is found at 11–92 (QVTFEELSAL…QVNATLRTAV (82 aa)). Residue S49 is modified to O-(pantetheine 4'-phosphoryl)serine.

4'-phosphopantetheine is transferred from CoA to a specific serine of the apo-ACP-like protein.

Functionally, involved in developmentally regulated synthesis of a compound biosynthetically related to polyketide antibiotics which is essential for spore color in Streptomyces halstedii. The chain is Probable acyl carrier protein (sch3) from Streptomyces halstedii.